A 152-amino-acid chain; its full sequence is Small ribosomal subunit protein uS15 (152 aa).

The protein belongs to the universal ribosomal protein uS15 family. In terms of assembly, part of the 30S ribosomal subunit.

The polypeptide is Small ribosomal subunit protein uS15 (Saccharolobus solfataricus (strain ATCC 35092 / DSM 1617 / JCM 11322 / P2) (Sulfolobus solfataricus)).